The following is a 716-amino-acid chain: Polyribonucleotide nucleotidyltransferase (716 aa).

Mg(2+)-binding residues include D486 and D492. In terms of domain architecture, KH spans 553-612 (PHIYNIKINPEKIKDVIGKGGAVIRALSDETDTKIDISDDGNITIAALSQKSAAFAQQRI). The 69-residue stretch at 622 to 690 (GRIYQGTVTR…RQGRIRLSIK (69 aa)) folds into the S1 motif domain.

It belongs to the polyribonucleotide nucleotidyltransferase family. In terms of assembly, component of the RNA degradosome, which is a multiprotein complex involved in RNA processing and mRNA degradation. The cofactor is Mg(2+).

It is found in the cytoplasm. It catalyses the reaction RNA(n+1) + phosphate = RNA(n) + a ribonucleoside 5'-diphosphate. Involved in mRNA degradation. Catalyzes the phosphorolysis of single-stranded polyribonucleotides processively in the 3'- to 5'-direction. The polypeptide is Polyribonucleotide nucleotidyltransferase (Hamiltonella defensa subsp. Acyrthosiphon pisum (strain 5AT)).